Here is a 337-residue protein sequence, read N- to C-terminus: Phenylalanine--tRNA ligase alpha subunit (337 aa).

Glu252 contributes to the Mg(2+) binding site.

Belongs to the class-II aminoacyl-tRNA synthetase family. Phe-tRNA synthetase alpha subunit type 1 subfamily. Tetramer of two alpha and two beta subunits. Mg(2+) is required as a cofactor.

Its subcellular location is the cytoplasm. It carries out the reaction tRNA(Phe) + L-phenylalanine + ATP = L-phenylalanyl-tRNA(Phe) + AMP + diphosphate + H(+). The protein is Phenylalanine--tRNA ligase alpha subunit of Francisella tularensis subsp. holarctica (strain OSU18).